The chain runs to 93 residues: Large ribosomal subunit protein uL23cz/uL23cy (93 aa).

It belongs to the universal ribosomal protein uL23 family. In terms of assembly, part of the 50S ribosomal subunit.

It is found in the plastid. The protein resides in the chloroplast. In terms of biological role, binds to 23S rRNA. The polypeptide is Large ribosomal subunit protein uL23cz/uL23cy (rpl23-A) (Eucalyptus globulus subsp. globulus (Tasmanian blue gum)).